The primary structure comprises 396 residues: Apolipoprotein A-IV (396 aa).

An N-terminal signal peptide occupies residues 1-20 (MFLKAVVLTLALVAVAGARA). 13 consecutive repeat copies span residues 33 to 54 (DYFS…KSEL), 60 to 81 (ALFQ…KKLV), 82 to 103 (PFAT…EEIG), 115 to 136 (PHAN…QRLE), 137 to 158 (PYAD…RQLT), 159 to 180 (PYAQ…ASLR), 181 to 202 (PHAD…GRLT), 203 to 224 (PYAD…RSLA), 225 to 246 (PYAQ…FQMK), 247 to 268 (KNAE…QRLA), 269 to 286 (PLAE…EGLQ), 287 to 308 (KSLA…RRVE), and 309 to 330 (PYGE…QKLG). Positions 33–330 (DYFSQLSNNA…QMEQLRQKLG (298 aa)) are 13 X 22 AA approximate tandem repeats. A disordered region spans residues 361-396 (KESQDKTLSLPELEQQQEQQQEQQQEQVQMLAPLES). A compositionally biased stretch (low complexity) spans 374–389 (EQQQEQQQEQQQEQVQ).

Belongs to the apolipoprotein A1/A4/E family. Homodimer. Post-translationally, phosphorylation sites are present in the extracellular medium. As to expression, synthesized primarily in the intestine and secreted in plasma.

It localises to the secreted. Its function is as follows. May have a role in chylomicrons and VLDL secretion and catabolism. Required for efficient activation of lipoprotein lipase by ApoC-II; potent activator of LCAT. Apoa-IV is a major component of HDL and chylomicrons. The sequence is that of Apolipoprotein A-IV from Homo sapiens (Human).